Consider the following 57-residue polypeptide: UPF0391 membrane protein RPA3029 (57 aa).

Transmembrane regions (helical) follow at residues 6 to 26 (WALI…TGIS) and 35 to 55 (ILFY…FTIF).

The protein belongs to the UPF0391 family.

It is found in the cell membrane. The protein is UPF0391 membrane protein RPA3029 of Rhodopseudomonas palustris (strain ATCC BAA-98 / CGA009).